Here is a 92-residue protein sequence, read N- to C-terminus: Small ribosomal subunit protein uS19 (92 aa).

It belongs to the universal ribosomal protein uS19 family.

In terms of biological role, protein S19 forms a complex with S13 that binds strongly to the 16S ribosomal RNA. This chain is Small ribosomal subunit protein uS19, found in Enterococcus faecalis (strain ATCC 700802 / V583).